We begin with the raw amino-acid sequence, 172 residues long: Translation initiation factor IF-3 (172 aa).

The protein belongs to the IF-3 family. As to quaternary structure, monomer.

The protein localises to the cytoplasm. Its function is as follows. IF-3 binds to the 30S ribosomal subunit and shifts the equilibrium between 70S ribosomes and their 50S and 30S subunits in favor of the free subunits, thus enhancing the availability of 30S subunits on which protein synthesis initiation begins. The sequence is that of Translation initiation factor IF-3 from Oceanobacillus iheyensis (strain DSM 14371 / CIP 107618 / JCM 11309 / KCTC 3954 / HTE831).